The following is a 617-amino-acid chain: Elongation factor 4 (617 aa).

Positions 17–203 (ERIRNFCIIA…RVCELVPHPV (187 aa)) constitute a tr-type G domain. Residues 29–34 (DHGKST) and 150–153 (NKID) each bind GTP.

This sequence belongs to the TRAFAC class translation factor GTPase superfamily. Classic translation factor GTPase family. LepA subfamily.

Its subcellular location is the cell membrane. The enzyme catalyses GTP + H2O = GDP + phosphate + H(+). In terms of biological role, required for accurate and efficient protein synthesis under certain stress conditions. May act as a fidelity factor of the translation reaction, by catalyzing a one-codon backward translocation of tRNAs on improperly translocated ribosomes. Back-translocation proceeds from a post-translocation (POST) complex to a pre-translocation (PRE) complex, thus giving elongation factor G a second chance to translocate the tRNAs correctly. Binds to ribosomes in a GTP-dependent manner. The sequence is that of Elongation factor 4 from Corynebacterium urealyticum (strain ATCC 43042 / DSM 7109).